The following is a 202-amino-acid chain: LexA repressor (202 aa).

A DNA-binding region (H-T-H motif) is located at residues 28–48; the sequence is RAEIAQRLGFRSPNAAEEHLK. Residues S119 and K156 each act as for autocatalytic cleavage activity in the active site.

This sequence belongs to the peptidase S24 family. Homodimer.

It carries out the reaction Hydrolysis of Ala-|-Gly bond in repressor LexA.. Functionally, represses a number of genes involved in the response to DNA damage (SOS response), including recA and lexA. Binds to the 16 bp palindromic sequence 5'-CTGTATATATATACAG-3'. In the presence of single-stranded DNA, RecA interacts with LexA causing an autocatalytic cleavage which disrupts the DNA-binding part of LexA, leading to derepression of the SOS regulon and eventually DNA repair. The sequence is that of LexA repressor from Escherichia coli (strain K12 / MC4100 / BW2952).